Reading from the N-terminus, the 308-residue chain is D-alanine--D-alanine ligase B (308 aa).

The ATP-grasp domain maps to Lys102–Glu302. Residue Pro128–Thr183 participates in ATP binding. Mg(2+) contacts are provided by Asp252, Glu269, and Asn271.

The protein belongs to the D-alanine--D-alanine ligase family. It depends on Mg(2+) as a cofactor. Mn(2+) serves as cofactor.

It localises to the cytoplasm. It carries out the reaction 2 D-alanine + ATP = D-alanyl-D-alanine + ADP + phosphate + H(+). It functions in the pathway cell wall biogenesis; peptidoglycan biosynthesis. Functionally, cell wall formation. The protein is D-alanine--D-alanine ligase B of Mesorhizobium japonicum (strain LMG 29417 / CECT 9101 / MAFF 303099) (Mesorhizobium loti (strain MAFF 303099)).